A 152-amino-acid chain; its full sequence is Ribosome maturation factor RimP (152 aa).

Belongs to the RimP family.

Its subcellular location is the cytoplasm. Functionally, required for maturation of 30S ribosomal subunits. This Burkholderia ambifaria (strain MC40-6) protein is Ribosome maturation factor RimP.